The following is a 353-amino-acid chain: Photosystem II protein D1 (353 aa).

Thr2 is modified (N-acetylthreonine). The residue at position 2 (Thr2) is a Phosphothreonine. Helical transmembrane passes span 29 to 46 (YIGW…TATS), 118 to 133 (HFLL…EWEL), and 142 to 156 (WIAV…AATA). Residue His118 coordinates chlorophyll a. Pheophytin a is bound at residue Tyr126. Residues Asp170 and Glu189 each coordinate [CaMn4O5] cluster. The chain crosses the membrane as a helical span at residues 197 to 218 (FHMLGVAGVFGGSLFSAMHGSL). Residue His198 coordinates chlorophyll a. A quinone contacts are provided by residues His215 and 264–265 (SF). His215 is a Fe cation binding site. Residue His272 coordinates Fe cation. The helical transmembrane segment at 274–288 (FLAAWPVVGIWFTAL) threads the bilayer. Positions 332, 333, 342, and 344 each coordinate [CaMn4O5] cluster. A propeptide spanning residues 345-353 (AVEAPAVNG) is cleaved from the precursor.

It belongs to the reaction center PufL/M/PsbA/D family. As to quaternary structure, PSII is composed of 1 copy each of membrane proteins PsbA, PsbB, PsbC, PsbD, PsbE, PsbF, PsbH, PsbI, PsbJ, PsbK, PsbL, PsbM, PsbT, PsbX, PsbY, PsbZ, Psb30/Ycf12, at least 3 peripheral proteins of the oxygen-evolving complex and a large number of cofactors. It forms dimeric complexes. The D1/D2 heterodimer binds P680, chlorophylls that are the primary electron donor of PSII, and subsequent electron acceptors. It shares a non-heme iron and each subunit binds pheophytin, quinone, additional chlorophylls, carotenoids and lipids. D1 provides most of the ligands for the Mn4-Ca-O5 cluster of the oxygen-evolving complex (OEC). There is also a Cl(-1) ion associated with D1 and D2, which is required for oxygen evolution. The PSII complex binds additional chlorophylls, carotenoids and specific lipids. is required as a cofactor. Post-translationally, tyr-161 forms a radical intermediate that is referred to as redox-active TyrZ, YZ or Y-Z. In terms of processing, C-terminally processed by CTPA; processing is essential to allow assembly of the oxygen-evolving complex and thus photosynthetic growth.

It is found in the plastid. Its subcellular location is the chloroplast thylakoid membrane. It catalyses the reaction 2 a plastoquinone + 4 hnu + 2 H2O = 2 a plastoquinol + O2. Functionally, photosystem II (PSII) is a light-driven water:plastoquinone oxidoreductase that uses light energy to abstract electrons from H(2)O, generating O(2) and a proton gradient subsequently used for ATP formation. It consists of a core antenna complex that captures photons, and an electron transfer chain that converts photonic excitation into a charge separation. The D1/D2 (PsbA/PsbD) reaction center heterodimer binds P680, the primary electron donor of PSII as well as several subsequent electron acceptors. In Conocephalum conicum (Snakeskin liverwort), this protein is Photosystem II protein D1.